The chain runs to 173 residues: Small ribosomal subunit protein uS5 (173 aa).

One can recognise an S5 DRBM domain in the interval 17-80 (LREKMIAVNR…EESRRNMIKV (64 aa)).

The protein belongs to the universal ribosomal protein uS5 family. Part of the 30S ribosomal subunit. Contacts proteins S4 and S8.

With S4 and S12 plays an important role in translational accuracy. In terms of biological role, located at the back of the 30S subunit body where it stabilizes the conformation of the head with respect to the body. In Delftia acidovorans (strain DSM 14801 / SPH-1), this protein is Small ribosomal subunit protein uS5.